Consider the following 400-residue polypeptide: Clotting factor B (400 aa).

A signal peptide spans 1–23 (MTWICVITLFALASATLGNKVSR). The region spanning 36 to 80 (ECTARGGLKGSCKSLIDCPSVLATLKDSFPVVCSWNGRFQPIVCC) is the Clip domain. 3 disulfide bridges follow: cysteine 37-cysteine 79, cysteine 47-cysteine 68, and cysteine 53-cysteine 80. Residues 104–124 (LPRLHISGCGKRKVKIDITTV) constitute a propeptide, activation peptide. An N-linked (GlcNAc...) asparagine glycan is attached at asparagine 140. Positions 148–392 (IAGGVEAKIG…YLDWIAKVTN (245 aa)) constitute a Peptidase S1 domain. Catalysis depends on charge relay system residues histidine 192 and aspartate 240. The N-linked (GlcNAc...) asparagine glycan is linked to asparagine 251. 2 disulfides stabilise this stretch: cysteine 307-cysteine 329 and cysteine 340-cysteine 368. Serine 344 (charge relay system) is an active-site residue. A glycan (N-linked (GlcNAc...) asparagine) is linked at asparagine 352.

This sequence belongs to the peptidase S1 family. CLIP subfamily. Upon activation by factor C, it is converted to a two-chain active form composed of a light and a heavy chain linked by a disulfide bond.

It localises to the secreted. The enzyme catalyses Selective cleavage of 98-Arg-|-Ile-99 bond in Limulus proclotting enzyme to form active clotting enzyme.. Strongly inhibited by alpha2-plasmin inhibitor and DFP. Partially inhibited by benzamidine, leupeptin and PCMB. Functionally, this enzyme is closely associated with an endotoxin-sensitive hemolymph coagulation system which may play important roles in both hemostasis and host defense mechanisms. Its active form catalyzes the activation of proclotting enzyme. Does not activate the mammalian coagulation factors factor IX, factor X, prothrombin, plasminogen, protein C or prekallikrein. Does not hydrolyze fibrinogen. Does not catalyze the activation of factor C or coagulogen. The polypeptide is Clotting factor B (Tachypleus tridentatus (Japanese horseshoe crab)).